Reading from the N-terminus, the 444-residue chain is 3-phosphoshikimate 1-carboxyvinyltransferase (444 aa).

Residues Lys32, Ser33, and Arg37 each contribute to the 3-phosphoshikimate site. A phosphoenolpyruvate-binding site is contributed by Lys32. Positions 105 and 133 each coordinate phosphoenolpyruvate. 3-phosphoshikimate is bound by residues Ser178, Gln180, Asp326, and Lys353. Gln180 provides a ligand contact to phosphoenolpyruvate. Catalysis depends on Asp326, which acts as the Proton acceptor. Arg357 and Arg398 together coordinate phosphoenolpyruvate.

The protein belongs to the EPSP synthase family. As to quaternary structure, monomer.

It localises to the cytoplasm. It catalyses the reaction 3-phosphoshikimate + phosphoenolpyruvate = 5-O-(1-carboxyvinyl)-3-phosphoshikimate + phosphate. It participates in metabolic intermediate biosynthesis; chorismate biosynthesis; chorismate from D-erythrose 4-phosphate and phosphoenolpyruvate: step 6/7. Functionally, catalyzes the transfer of the enolpyruvyl moiety of phosphoenolpyruvate (PEP) to the 5-hydroxyl of shikimate-3-phosphate (S3P) to produce enolpyruvyl shikimate-3-phosphate and inorganic phosphate. This is 3-phosphoshikimate 1-carboxyvinyltransferase from Nitrosococcus oceani (strain ATCC 19707 / BCRC 17464 / JCM 30415 / NCIMB 11848 / C-107).